Reading from the N-terminus, the 295-residue chain is Virginiamycin B lyase (295 aa).

H227 is a substrate binding site. E267 is a binding site for Mg(2+). The active-site Proton acceptor is the H269. E284 provides a ligand contact to Mg(2+).

Belongs to the Vgb family. Monomer. Requires Mg(2+) as cofactor.

Functionally, inactivates the type B streptogramin antibiotics by linearizing the lactone ring at the ester linkage, generating a free phenylglycine carboxylate and converting the threonyl moiety into 2-amino-butenoic acid. The sequence is that of Virginiamycin B lyase from Bacillus licheniformis (strain ATCC 14580 / DSM 13 / JCM 2505 / CCUG 7422 / NBRC 12200 / NCIMB 9375 / NCTC 10341 / NRRL NRS-1264 / Gibson 46).